The chain runs to 416 residues: Chromate transport protein (416 aa).

A disordered region spans residues 1–21 (MSVANEESYRPSKATDATTEA). 11 consecutive transmembrane segments (helical) span residues 99-119 (LGGV…MFAL), 128-148 (FVGT…IALI), 160-177 (LLDR…LAAI), 181-198 (DFWI…LLVL), 204-224 (ALLV…WAAP), 237-257 (ASVL…FGGA), 283-303 (LALS…VGYV), 308-328 (IGAV…SLIF), 341-361 (LHAF…ATTI), 371-391 (VPSL…LYAW), and 395-415 (LNVV…FPNQ).

This sequence belongs to the chromate ion transporter (CHR) (TC 2.A.51) family.

It localises to the cell inner membrane. This protein reduces chromate accumulation and is essential for chromate resistance. This Pseudomonas aeruginosa protein is Chromate transport protein.